The following is a 494-amino-acid chain: Putative myristoylated protein 006R (494 aa).

The N-myristoyl glycine; by host moiety is linked to residue Gly-2. 3 helical membrane-spanning segments follow: residues 193-213, 214-234, and 465-485; these read VAAL…GGIA, VAGR…LVVW, and WLLY…ILAF.

This sequence belongs to the IIV-6 118L/458R family.

The protein localises to the membrane. This chain is Putative myristoylated protein 006R, found in Aedes vexans (Inland floodwater mosquito).